An 87-amino-acid chain; its full sequence is Large ribosomal subunit protein bL27 (87 aa).

Residues 1 to 21 (MAHKKAGGSSRNGRDSESKRL) form a disordered region.

It belongs to the bacterial ribosomal protein bL27 family.

The protein is Large ribosomal subunit protein bL27 of Burkholderia mallei (strain NCTC 10247).